The following is a 302-amino-acid chain: 4-hydroxy-tetrahydrodipicolinate synthase (302 aa).

T55 is a pyruvate binding site. Y144 functions as the Proton donor/acceptor in the catalytic mechanism. K172 acts as the Schiff-base intermediate with substrate in catalysis. V214 contributes to the pyruvate binding site.

This sequence belongs to the DapA family. Homotetramer; dimer of dimers.

The protein localises to the cytoplasm. It catalyses the reaction L-aspartate 4-semialdehyde + pyruvate = (2S,4S)-4-hydroxy-2,3,4,5-tetrahydrodipicolinate + H2O + H(+). The protein operates within amino-acid biosynthesis; L-lysine biosynthesis via DAP pathway; (S)-tetrahydrodipicolinate from L-aspartate: step 3/4. Catalyzes the condensation of (S)-aspartate-beta-semialdehyde [(S)-ASA] and pyruvate to 4-hydroxy-tetrahydrodipicolinate (HTPA). The protein is 4-hydroxy-tetrahydrodipicolinate synthase of Parasynechococcus marenigrum (strain WH8102).